Reading from the N-terminus, the 100-residue chain is MIPLTHGLILAAILFVLGLTGLVIRRNLLFMLIGLEIMINASALAFVVAGSYWGQPDGQVMYILAISLAAAEASIGLALLLQLHRRRQNLNIDSVSELRG.

3 consecutive transmembrane segments (helical) span residues 4-24 (LTHG…GLVI), 28-48 (LLFM…AFVV), and 60-80 (VMYI…LALL).

This sequence belongs to the complex I subunit 4L family. As to quaternary structure, NDH-1 is composed of 13 different subunits. Subunits NuoA, H, J, K, L, M, N constitute the membrane sector of the complex.

Its subcellular location is the cell inner membrane. It carries out the reaction a quinone + NADH + 5 H(+)(in) = a quinol + NAD(+) + 4 H(+)(out). Its function is as follows. NDH-1 shuttles electrons from NADH, via FMN and iron-sulfur (Fe-S) centers, to quinones in the respiratory chain. The immediate electron acceptor for the enzyme in this species is believed to be ubiquinone. Couples the redox reaction to proton translocation (for every two electrons transferred, four hydrogen ions are translocated across the cytoplasmic membrane), and thus conserves the redox energy in a proton gradient. This chain is NADH-quinone oxidoreductase subunit K, found in Enterobacter sp. (strain 638).